The chain runs to 1034 residues: Putative beta-glucuronidase (1034 aa).

Glu-432 (proton donor) is an active-site residue. A CBM6 domain is found at 909–1034; sequence VDISAEEGVL…GPFIDELFID (126 aa).

It belongs to the glycosyl hydrolase 2 family.

The protein localises to the cytoplasm. It catalyses the reaction a beta-D-glucuronoside + H2O = D-glucuronate + an alcohol. Glycoside hydrolase that may be involved in ulvan degradation. Ulvan is the main polysaccharide component of the Ulvales (green seaweed) cell wall. It is composed of disaccharide building blocks comprising 3-sulfated rhamnose (Rha3S) linked to D-glucuronic acid (GlcA), L-iduronic acid (IduA), or D-xylose (Xyl). The chain is Putative beta-glucuronidase from Formosa agariphila (strain DSM 15362 / KCTC 12365 / LMG 23005 / KMM 3901 / M-2Alg 35-1).